The sequence spans 386 residues: Succinate--CoA ligase [ADP-forming] subunit beta (386 aa).

Positions 9–244 constitute an ATP-grasp domain; sequence KDLLASYDVP…PSQENVRDVL (236 aa). ATP contacts are provided by residues Lys46, 53–55, Val102, and Glu107; that span reads GRG. Mg(2+) is bound by residues Asn199 and Asp213. Substrate contacts are provided by residues Asn264 and 321-323; that span reads GIM.

This sequence belongs to the succinate/malate CoA ligase beta subunit family. In terms of assembly, heterotetramer of two alpha and two beta subunits. Requires Mg(2+) as cofactor.

The enzyme catalyses succinate + ATP + CoA = succinyl-CoA + ADP + phosphate. The catalysed reaction is GTP + succinate + CoA = succinyl-CoA + GDP + phosphate. Its pathway is carbohydrate metabolism; tricarboxylic acid cycle; succinate from succinyl-CoA (ligase route): step 1/1. Functionally, succinyl-CoA synthetase functions in the citric acid cycle (TCA), coupling the hydrolysis of succinyl-CoA to the synthesis of either ATP or GTP and thus represents the only step of substrate-level phosphorylation in the TCA. The beta subunit provides nucleotide specificity of the enzyme and binds the substrate succinate, while the binding sites for coenzyme A and phosphate are found in the alpha subunit. The protein is Succinate--CoA ligase [ADP-forming] subunit beta of Chlamydia pneumoniae (Chlamydophila pneumoniae).